Here is a 135-residue protein sequence, read N- to C-terminus: Small ribosomal subunit protein uS12 (135 aa).

Asp-89 bears the 3-methylthioaspartic acid mark. Residues 106 to 135 form a disordered region; it reads GVKDRKQGRSKYGAKRPKPGQAPAAAGKKK. Basic residues predominate over residues 113–123; that stretch reads GRSKYGAKRPK. Positions 124-135 are enriched in low complexity; the sequence is PGQAPAAAGKKK.

The protein belongs to the universal ribosomal protein uS12 family. As to quaternary structure, part of the 30S ribosomal subunit. Contacts proteins S8 and S17. May interact with IF1 in the 30S initiation complex.

In terms of biological role, with S4 and S5 plays an important role in translational accuracy. Its function is as follows. Interacts with and stabilizes bases of the 16S rRNA that are involved in tRNA selection in the A site and with the mRNA backbone. Located at the interface of the 30S and 50S subunits, it traverses the body of the 30S subunit contacting proteins on the other side and probably holding the rRNA structure together. The combined cluster of proteins S8, S12 and S17 appears to hold together the shoulder and platform of the 30S subunit. The sequence is that of Small ribosomal subunit protein uS12 from Synechococcus sp. (strain JA-3-3Ab) (Cyanobacteria bacterium Yellowstone A-Prime).